A 438-amino-acid chain; its full sequence is Probable glucose-6-phosphate isomerase (438 aa).

Glu280 (proton donor) is an active-site residue. Residues His301 and Lys410 contribute to the active site.

This sequence belongs to the GPI family.

It localises to the cytoplasm. The catalysed reaction is alpha-D-glucose 6-phosphate = beta-D-fructose 6-phosphate. It participates in carbohydrate biosynthesis; gluconeogenesis. It functions in the pathway carbohydrate degradation; glycolysis; D-glyceraldehyde 3-phosphate and glycerone phosphate from D-glucose: step 2/4. Its function is as follows. Catalyzes the reversible isomerization of glucose-6-phosphate to fructose-6-phosphate. The polypeptide is Probable glucose-6-phosphate isomerase (Methanococcus maripaludis (strain DSM 14266 / JCM 13030 / NBRC 101832 / S2 / LL)).